Here is a 65-residue protein sequence, read N- to C-terminus: Large ribosomal subunit protein bL33c (65 aa).

It belongs to the bacterial ribosomal protein bL33 family.

The protein localises to the plastid. It localises to the chloroplast. This is Large ribosomal subunit protein bL33c from Staurastrum punctulatum (Green alga).